A 79-amino-acid polypeptide reads, in one-letter code: Cytochrome c oxidase assembly factor 6 homolog (79 aa).

The 44-residue stretch at arginine 9–phenylalanine 52 folds into the CHCH domain. The Cx9C motif signature appears at cysteine 12 to cysteine 22. 2 cysteine pairs are disulfide-bonded: cysteine 12–cysteine 44 and cysteine 22–cysteine 33. A Cx10C motif motif is present at residues cysteine 33–cysteine 44.

This sequence belongs to the cytochrome c oxidase subunit 6B family. As to quaternary structure, found in a complex with TMEM177, COX20, MT-CO2/COX2, COX18, SCO1 and SCO2. Interacts with COA1, MT-CO2/COX2, SCO1, SCO2 and COX20. Interacts with COX20 in a MT-CO2/COX2- and COX18-dependent manner. Interacts with COX16.

It localises to the mitochondrion intermembrane space. Functionally, involved in the maturation of the mitochondrial respiratory chain complex IV subunit MT-CO2/COX2. Thereby, may regulate early steps of complex IV assembly. Mitochondrial respiratory chain complex IV or cytochrome c oxidase is the component of the respiratory chain that catalyzes the transfer of electrons from intermembrane space cytochrome c to molecular oxygen in the matrix and as a consequence contributes to the proton gradient involved in mitochondrial ATP synthesis. May also be required for efficient formation of respiratory supercomplexes comprised of complexes III and IV. The sequence is that of Cytochrome c oxidase assembly factor 6 homolog (COA6) from Bos taurus (Bovine).